The chain runs to 325 residues: Replication factor C small subunit (325 aa).

52–59 contributes to the ATP binding site; that stretch reads GPAGVGKT.

The protein belongs to the activator 1 small subunits family. RfcS subfamily. In terms of assembly, heteromultimer composed of small subunits (RfcS) and large subunits (RfcL).

Functionally, part of the RFC clamp loader complex which loads the PCNA sliding clamp onto DNA. The protein is Replication factor C small subunit of Natronomonas pharaonis (strain ATCC 35678 / DSM 2160 / CIP 103997 / JCM 8858 / NBRC 14720 / NCIMB 2260 / Gabara) (Halobacterium pharaonis).